Reading from the N-terminus, the 158-residue chain is Regulator of sigma D (158 aa).

The protein belongs to the Rsd/AlgQ family. As to quaternary structure, interacts with RpoD.

It is found in the cytoplasm. In terms of biological role, binds RpoD and negatively regulates RpoD-mediated transcription activation by preventing the interaction between the primary sigma factor RpoD with the catalytic core of the RNA polymerase and with promoter DNA. May be involved in replacement of the RNA polymerase sigma subunit from RpoD to RpoS during the transition from exponential growth to the stationary phase. The polypeptide is Regulator of sigma D (Escherichia fergusonii (strain ATCC 35469 / DSM 13698 / CCUG 18766 / IAM 14443 / JCM 21226 / LMG 7866 / NBRC 102419 / NCTC 12128 / CDC 0568-73)).